We begin with the raw amino-acid sequence, 191 residues long: Adenylate kinase (191 aa).

Residue 12-17 participates in ATP binding; that stretch reads GSGKTT. The interval 34–63 is NMP; sequence STGDLLRAESAKKTERGLLIEKFTSQGELV. Residues Thr35, Arg40, 61–63, 88–91, and Gln95 each bind AMP; these read ELV and GYPR. The tract at residues 130–136 is LID; the sequence is GRSRGAD. Arg131 is a binding site for ATP. AMP-binding residues include Arg133 and Arg145. Position 173 (Arg173) interacts with ATP.

The protein belongs to the adenylate kinase family. As to quaternary structure, monomer.

The protein resides in the cytoplasm. It carries out the reaction AMP + ATP = 2 ADP. Its pathway is purine metabolism; AMP biosynthesis via salvage pathway; AMP from ADP: step 1/1. Its function is as follows. Catalyzes the reversible transfer of the terminal phosphate group between ATP and AMP. Plays an important role in cellular energy homeostasis and in adenine nucleotide metabolism. This is Adenylate kinase from Helicobacter pylori (strain HPAG1).